The following is a 95-amino-acid chain: Protein Vpr (95 aa).

The homooligomerization stretch occupies residues Met-1–Leu-42. Phosphoserine; by host is present on residues Ser-79, Ser-93, and Ser-95.

It belongs to the HIV-1 VPR protein family. As to quaternary structure, homooligomer, may form homodimer. Interacts with p6-gag region of the Pr55 Gag precursor protein through a (Leu-X-X)4 motif near the C-terminus of the P6gag protein. Interacts with host UNG. May interact with host RAD23A/HHR23A. Interacts with host VPRBP/DCAF1, leading to hijack the CUL4A-RBX1-DDB1-DCAF1/VPRBP complex, mediating ubiquitination of host proteins such as TERT and ZGPAT and arrest of the cell cycle in G2 phase. In terms of processing, phosphorylated on several residues by host. These phosphorylations regulate VPR activity for the nuclear import of the HIV-1 pre-integration complex.

The protein resides in the virion. It localises to the host nucleus. The protein localises to the host extracellular space. Its function is as follows. During virus replication, may deplete host UNG protein, and incude G2-M cell cycle arrest. Acts by targeting specific host proteins for degradation by the 26S proteasome, through association with the cellular CUL4A-DDB1 E3 ligase complex by direct interaction with host VPRPB/DCAF-1. Cell cycle arrest reportedly occurs within hours of infection and is not blocked by antiviral agents, suggesting that it is initiated by the VPR carried into the virion. Additionally, VPR induces apoptosis in a cell cycle dependent manner suggesting that these two effects are mechanistically linked. Detected in the serum and cerebrospinal fluid of AIDS patient, VPR may also induce cell death to bystander cells. In terms of biological role, during virus entry, plays a role in the transport of the viral pre-integration (PIC) complex to the host nucleus. This function is crucial for viral infection of non-dividing macrophages. May act directly at the nuclear pore complex, by binding nucleoporins phenylalanine-glycine (FG)-repeat regions. The sequence is that of Protein Vpr from Pan troglodytes (Chimpanzee).